Consider the following 115-residue polypeptide: UPF0122 protein lp_1634 (115 aa).

It belongs to the UPF0122 family.

In terms of biological role, might take part in the signal recognition particle (SRP) pathway. This is inferred from the conservation of its genetic proximity to ftsY/ffh. May be a regulatory protein. In Lactiplantibacillus plantarum (strain ATCC BAA-793 / NCIMB 8826 / WCFS1) (Lactobacillus plantarum), this protein is UPF0122 protein lp_1634.